A 688-amino-acid chain; its full sequence is NADH-ubiquinone oxidoreductase 75 kDa subunit (688 aa).

The 85-residue stretch at 1-85 (MLIRFKINEI…DESIETEIDE (85 aa)) folds into the 2Fe-2S ferredoxin-type domain. The [2Fe-2S] cluster site is built by C38, C49, C52, and C66. The 40-residue stretch at 85–124 (EILKAREGVMEFLLINHPLDCPICDQGGECDLQEQTIAYG) folds into the 4Fe-4S His(Cys)3-ligated-type domain. The [4Fe-4S] cluster site is built by H101, C105, C108, C114, C153, C156, C159, and C204. The 4Fe-4S Mo/W bis-MGD-type domain maps to 223 to 279 (LKNIKGIDIFDTVLTPINYQVKGGEIFRILPRINDRLNEEWITDKVRFHYESYKIIE).

The protein belongs to the complex I 75 kDa subunit family. In terms of assembly, complex I is composed of about 45 different subunits. [2Fe-2S] cluster is required as a cofactor. Requires [4Fe-4S] cluster as cofactor.

It is found in the mitochondrion inner membrane. It carries out the reaction a ubiquinone + NADH + 5 H(+)(in) = a ubiquinol + NAD(+) + 4 H(+)(out). Its function is as follows. Core subunit of the mitochondrial membrane respiratory chain NADH dehydrogenase (Complex I) that is believed to belong to the minimal assembly required for catalysis. Complex I functions in the transfer of electrons from NADH to the respiratory chain. The immediate electron acceptor for the enzyme is believed to be ubiquinone. This is the largest subunit of complex I and it is a component of the iron-sulfur (IP) fragment of the enzyme. It may form part of the active site crevice where NADH is oxidized. In Dictyostelium citrinum (Slime mold), this protein is NADH-ubiquinone oxidoreductase 75 kDa subunit (nad11).